Reading from the N-terminus, the 90-residue chain is Acylphosphatase (90 aa).

Residues Cys-5–Gly-90 form the Acylphosphatase-like domain. Catalysis depends on residues Arg-20 and Asn-38.

Belongs to the acylphosphatase family.

The enzyme catalyses an acyl phosphate + H2O = a carboxylate + phosphate + H(+). In Chromohalobacter salexigens (strain ATCC BAA-138 / DSM 3043 / CIP 106854 / NCIMB 13768 / 1H11), this protein is Acylphosphatase (acyP).